We begin with the raw amino-acid sequence, 1828 residues long: InaD-like protein (1828 aa).

The L27 domain maps to 5–65 (PAPDKLQVLQ…SIKQLKGQLS (61 aa)). 3 PDZ domains span residues 134-221 (YIDI…AREP), 248-328 (DVEL…ARDP), and 365-453 (GVEL…VRRK). Phosphoserine is present on residues Ser-459 and Ser-522. The PDZ 4 domain maps to 553–639 (DAELQKYSKL…PFTLVCCRRL (87 aa)). Ser-645 carries the phosphoserine modification. PDZ domains are found at residues 686-758 (IVEL…EVLK) and 1070-1162 (IVEI…QSLS). Residues 1168–1220 (IPSVHNKANKIANNQDQNTEEKKEKRQGTPPPPMKLPPPYKAPSDDSDENEEE) are disordered. The span at 1196–1208 (TPPPPMKLPPPYK) shows a compositional bias: pro residues. A Phosphoserine modification is found at Ser-1211. One can recognise a PDZ 7 domain in the interval 1241-1324 (IIELEKDKNG…KVKLVFIRNE (84 aa)). Residues 1333–1362 (APFPVPSSSPSSLEDQSGTEPVSSEEDGSL) form a disordered region. Residues 1345–1354 (LEDQSGTEPV) show a composition bias toward polar residues. 2 consecutive PDZ domains span residues 1464–1547 (IIEI…YRDE) and 1560–1642 (PVDL…GRLR). Thr-1535 is modified (phosphothreonine). A compositionally biased stretch (polar residues) spans 1645–1668 (SWTSSRKTSQNSQGSQHSTHSSFH). The segment at 1645–1669 (SWTSSRKTSQNSQGSQHSTHSSFHP) is disordered. The PDZ 10 domain maps to 1703-1789 (TVEIIRELSD…RIILQVVADT (87 aa)). The tract at residues 1805-1828 (YHLGSPTAEHHPEDTEEPLQMTAG) is disordered.

As to quaternary structure, forms a ternary complex with PALS1 and CRB1. Component of a complex whose core is composed of ARHGAP17, AMOT, PALS1, INADL/PATJ and PARD3/PAR3. Forms a heterotrimeric complex composed of MMP5, LIN7B and PATJ; the N-terminal L27 domain of PALS1 interacts with the L27 domain of PATJ and the C-terminal L27 domain of PALS1 interacts with the L27 domain of LIN7B. Component of a complex composed of CRB3, PALS1 and PATJ. As part of the Crumbs complex; interacts with WWP1, the interaction is enhanced by AMOTL2 and facilitates WWP1 localization to the plasma membrane. The Crumbs complex promotes monoubiquitination of AMOTL2 by WWP1, which activates the Hippo signaling pathway. Interacts (via N-terminus) with PALS1/PALS (via PDZ domain). Interacts with TJP3/ZO-3 and CLDN1/claudin-1. Interacts with ASIC3, KCNJ10, KCNJ15, GRIN2A, GRIN2B, GRIN2C, GRIN2D, NLGN2, and HTR2A. Interacts with MPP7. Directly interacts with HTR4. Interacts (via PDZ domain 8) with WWC1 (via the ADDV motif). Interacts with SLC6A4. Interacts (via C-terminus) with ARHGEF18. Interacts with NPHP1. Interacts with PARD3/PAR3. Interacts (via PDZ1-6 domains) with TJP1/ZO1; the interaction is required for attachment and extension of TJP1/ZO1 condensates along the apical cell interface.

It localises to the cell junction. Its subcellular location is the tight junction. The protein localises to the apical cell membrane. The protein resides in the cytoplasm. It is found in the perinuclear region. In terms of biological role, scaffolding protein that facilitates the localization of proteins to the cell membrane. Required for the correct formation of tight junctions and epithelial apico-basal polarity. Acts (via its L27 domain) as an apical connector and elongation factor for multistranded TJP1/ZO1 condensates that form a tight junction belt, thereby required for the formation of the tight junction-mediated cell barrier. Positively regulates epithelial cell microtubule elongation and cell migration, possibly via facilitating localization of PRKCI/aPKC and PAR3D/PAR3 at the leading edge of migrating cells. Plays a role in the correct reorientation of the microtubule-organizing center during epithelial migration. May regulate the surface expression and/or function of ASIC3 in sensory neurons. May recruit ARHGEF18 to apical cell-cell boundaries. The chain is InaD-like protein from Canis lupus familiaris (Dog).